Here is a 70-residue protein sequence, read N- to C-terminus: MPKQIHEIKDFLLTARRKDAKSVKIKKNKDNVKFKVRCSRYLYTLVITDKEKADKLKQSLPPGLAVKELK.

Belongs to the eukaryotic ribosomal protein eL38 family.

In Branchiostoma belcheri (Amphioxus), this protein is Large ribosomal subunit protein eL38 (RPL38).